The following is a 534-amino-acid chain: Allene oxide synthase 1, chloroplastic (534 aa).

Disordered regions lie at residues M1–R31 and E43–Q71. The transit peptide at M1 to P69 directs the protein to the chloroplast. 2 stretches are compositionally biased toward low complexity: residues S17–R31 and E43–P62. Positions 149, 180, and 184 each coordinate heme b. The (13S)-hydroperoxy-(9Z,11E)-octadecadienoate site is built by N337 and K343. (13S)-hydroperoxy-(9Z,11E,15Z)-octadecatrienoate is bound at residue N337. K485 and C487 together coordinate heme b.

Belongs to the cytochrome P450 family. It depends on heme b as a cofactor. As to expression, expressed in flowers. Detected in stems and roots, but not in leaves and fruits under non-inducing conditions.

It localises to the plastid. It is found in the chloroplast. The catalysed reaction is (13S)-hydroperoxy-(9Z,11E,15Z)-octadecatrienoate = (9Z,13S,15Z)-12,13-epoxyoctadeca-9,11,15-trienoate + H2O. It carries out the reaction (13S)-hydroperoxy-(9Z,11E)-octadecadienoate = (9Z,13S)-12,13-epoxyoctadeca-9,11-dienoate + H2O. Cytochrome P450 of the CYP74A subfamily involved in the biosynthesis of jasmonic acid from lipoxygenase-derived hydroperoxides of free fatty acids. Catalyzes the synthesis of unstable allene oxide, which is further converted spontaneously by hydrolysis or cyclization. Can use 13S-hydroperoxy-9(Z),11(E),15(Z)-octadecatrienoic acid (13-HPOT) and 13S-hydroperoxy-9(Z),11(E)-octadecadienoic acid (13-HPOD) as substrates. In Solanum lycopersicum (Tomato), this protein is Allene oxide synthase 1, chloroplastic.